Consider the following 306-residue polypeptide: Oxygen-dependent coproporphyrinogen-III oxidase (306 aa).

Serine 94 serves as a coordination point for substrate. Residues histidine 98 and histidine 108 each coordinate a divalent metal cation. The active-site Proton donor is the histidine 108. 110–112 is a substrate binding site; sequence NVR. 2 residues coordinate a divalent metal cation: histidine 147 and histidine 177. Positions 242–277 are important for dimerization; sequence YVEFNLVYDRGTLFGLQTGGRTESILMSMPPLVRWQ. 260–262 is a binding site for substrate; it reads GGR.

Belongs to the aerobic coproporphyrinogen-III oxidase family. In terms of assembly, homodimer. Requires a divalent metal cation as cofactor.

The protein resides in the cytoplasm. It carries out the reaction coproporphyrinogen III + O2 + 2 H(+) = protoporphyrinogen IX + 2 CO2 + 2 H2O. Its pathway is porphyrin-containing compound metabolism; protoporphyrin-IX biosynthesis; protoporphyrinogen-IX from coproporphyrinogen-III (O2 route): step 1/1. Involved in the heme biosynthesis. Catalyzes the aerobic oxidative decarboxylation of propionate groups of rings A and B of coproporphyrinogen-III to yield the vinyl groups in protoporphyrinogen-IX. This Shewanella sediminis (strain HAW-EB3) protein is Oxygen-dependent coproporphyrinogen-III oxidase.